Reading from the N-terminus, the 508-residue chain is Photosystem II CP47 reaction center protein (508 aa).

6 consecutive transmembrane segments (helical) span residues 21 to 36, 101 to 115, 140 to 156, 203 to 218, 237 to 252, and 457 to 472; these read AVHI…WAGS, ILFS…IWHW, GIHL…FGAF, IAAG…FHLS, VLSS…AFVV, and SFAL…HGAR.

It belongs to the PsbB/PsbC family. PsbB subfamily. In terms of assembly, PSII is composed of 1 copy each of membrane proteins PsbA, PsbB, PsbC, PsbD, PsbE, PsbF, PsbH, PsbI, PsbJ, PsbK, PsbL, PsbM, PsbT, PsbX, PsbY, PsbZ, Psb30/Ycf12, at least 3 peripheral proteins of the oxygen-evolving complex and a large number of cofactors. It forms dimeric complexes. Binds multiple chlorophylls. PSII binds additional chlorophylls, carotenoids and specific lipids. is required as a cofactor.

It is found in the plastid. It localises to the chloroplast thylakoid membrane. In terms of biological role, one of the components of the core complex of photosystem II (PSII). It binds chlorophyll and helps catalyze the primary light-induced photochemical processes of PSII. PSII is a light-driven water:plastoquinone oxidoreductase, using light energy to abstract electrons from H(2)O, generating O(2) and a proton gradient subsequently used for ATP formation. In Oenothera biennis (German evening primrose), this protein is Photosystem II CP47 reaction center protein.